We begin with the raw amino-acid sequence, 79 residues long: MARIGVENSLTDVQQALKQQGHEVVTLNSEQDAQGCDCCVVTGQDSNMMGIADASIKGSVITAHGLTTDDICQQVESRT.

This sequence belongs to the UPF0180 family.

In Bacillus cereus (strain AH820), this protein is UPF0180 protein BCAH820_1484.